A 22-amino-acid polypeptide reads, in one-letter code: 5-methyltetrahydropteroyltriglutamate--homocysteine methyltransferase (22 aa).

It belongs to the vitamin-B12 independent methionine synthase family. Requires Zn(2+) as cofactor.

It localises to the cytoplasm. The enzyme catalyses 5-methyltetrahydropteroyltri-L-glutamate + L-homocysteine = tetrahydropteroyltri-L-glutamate + L-methionine. It functions in the pathway amino-acid biosynthesis; L-methionine biosynthesis via de novo pathway; L-methionine from L-homocysteine (MetE route): step 1/1. Functionally, catalyzes the transfer of a methyl group from 5-methyltetrahydrofolate to homocysteine resulting in methionine formation. The polypeptide is 5-methyltetrahydropteroyltriglutamate--homocysteine methyltransferase (Pseudotsuga menziesii (Douglas-fir)).